The chain runs to 448 residues: Tubulin beta chain (448 aa).

Positions 11, 69, 138, 142, 143, 144, 204, and 226 each coordinate GTP. E69 contacts Mg(2+). The disordered stretch occupies residues 425 to 448 (YQDASISEGEEEYLEEEEPLEHEE). Acidic residues predominate over residues 432–448 (EGEEEYLEEEEPLEHEE).

It belongs to the tubulin family. In terms of assembly, dimer of alpha and beta chains. A typical microtubule is a hollow water-filled tube with an outer diameter of 25 nm and an inner diameter of 15 nM. Alpha-beta heterodimers associate head-to-tail to form protofilaments running lengthwise along the microtubule wall with the beta-tubulin subunit facing the microtubule plus end conferring a structural polarity. Microtubules usually have 13 protofilaments but different protofilament numbers can be found in some organisms and specialized cells. The cofactor is Mg(2+).

It localises to the cytoplasm. Its subcellular location is the cytoskeleton. In terms of biological role, tubulin is the major constituent of microtubules, a cylinder consisting of laterally associated linear protofilaments composed of alpha- and beta-tubulin heterodimers. Microtubules grow by the addition of GTP-tubulin dimers to the microtubule end, where a stabilizing cap forms. Below the cap, tubulin dimers are in GDP-bound state, owing to GTPase activity of alpha-tubulin. The sequence is that of Tubulin beta chain from Aspergillus flavus.